The primary structure comprises 493 residues: Adenylyltransferase and sulfurtransferase uba4 (493 aa).

Residues glycine 99, aspartate 120, 127 to 131, lysine 144, and 188 to 189 each bind ATP; these read SNLHR and DN. The Zn(2+) site is built by cysteine 237 and cysteine 240. Cysteine 254 acts as the Glycyl thioester intermediate; for adenylyltransferase activity in catalysis. Zn(2+)-binding residues include cysteine 316 and cysteine 319. Residues 376-491 form the Rhodanese domain; sequence INKEPTIIDV…WREQIDPDWP (116 aa). Cysteine 446 acts as the Cysteine persulfide intermediate; for sulfurtransferase activity in catalysis.

In the N-terminal section; belongs to the HesA/MoeB/ThiF family. UBA4 subfamily. Zn(2+) is required as a cofactor.

It localises to the cytoplasm. It is found in the cytosol. It catalyses the reaction [molybdopterin-synthase sulfur-carrier protein]-C-terminal Gly-Gly + ATP + H(+) = [molybdopterin-synthase sulfur-carrier protein]-C-terminal Gly-Gly-AMP + diphosphate. It carries out the reaction [molybdopterin-synthase sulfur-carrier protein]-C-terminal Gly-Gly-AMP + S-sulfanyl-L-cysteinyl-[cysteine desulfurase] + AH2 = [molybdopterin-synthase sulfur-carrier protein]-C-terminal-Gly-aminoethanethioate + L-cysteinyl-[cysteine desulfurase] + A + AMP + 2 H(+). The protein operates within tRNA modification; 5-methoxycarbonylmethyl-2-thiouridine-tRNA biosynthesis. It participates in cofactor biosynthesis; molybdopterin biosynthesis. Plays a central role in 2-thiolation of mcm(5)S(2)U at tRNA wobble positions of cytosolic tRNA(Lys), tRNA(Glu) and tRNA(Gln). Also essential during biosynthesis of the molybdenum cofactor. Acts by mediating the C-terminal thiocarboxylation of sulfur carriers urm1 and mocs2a. Its N-terminus first activates urm1 and mocs2a as acyl-adenylates (-COAMP), then the persulfide sulfur on the catalytic cysteine is transferred to urm1 and mocs2a to form thiocarboxylation (-COSH) of their C-terminus. The reaction probably involves hydrogen sulfide that is generated from the persulfide intermediate and that acts as a nucleophile towards urm1 and mocs2a. Subsequently, a transient disulfide bond is formed. Does not use thiosulfate as sulfur donor; nfs1 probably acting as a sulfur donor for thiocarboxylation reactions. In Aspergillus fumigatus (strain ATCC MYA-4609 / CBS 101355 / FGSC A1100 / Af293) (Neosartorya fumigata), this protein is Adenylyltransferase and sulfurtransferase uba4.